Here is a 256-residue protein sequence, read N- to C-terminus: MADPQIITIPCLQDNYAFLLHDPSTGATACIDVPDAAPIQAALGAQGWTLTDILLTHHHWDHIDGVPALVEATGAKVWGAAADAHRLPPLDHALAEGDTIRIGALEGDVMDVSGHTVGHVAFHFPAATAVFTADSLMALGCGRLFEGTPAQMHGSLEKLKMLPPGTLVCSGHEYTASNARFALTIEPDNPDLIFRVERITAARAAGQPTVPSTLAEELATNPFLRADAPTVAAPLDMEGADPVDVFTRIRAQKDSF.

Zn(2+) contacts are provided by His57, His59, Asp61, His62, His115, Asp134, and His172.

It belongs to the metallo-beta-lactamase superfamily. Glyoxalase II family. As to quaternary structure, monomer. Zn(2+) serves as cofactor.

The enzyme catalyses an S-(2-hydroxyacyl)glutathione + H2O = a 2-hydroxy carboxylate + glutathione + H(+). It functions in the pathway secondary metabolite metabolism; methylglyoxal degradation; (R)-lactate from methylglyoxal: step 2/2. Thiolesterase that catalyzes the hydrolysis of S-D-lactoyl-glutathione to form glutathione and D-lactic acid. The sequence is that of Hydroxyacylglutathione hydrolase from Jannaschia sp. (strain CCS1).